The primary structure comprises 560 residues: Membrane-bound O-acyltransferase GUP1 (560 aa).

At 1–43 the chain is on the extracellular side; that stretch reads MSLISILSPLITSEGLDSRIKPSPKKDASTTTKPSLWKTTEFK. Residues 44 to 64 traverse the membrane as a helical segment; sequence FYYIAFLVVVPLMFYAGLQAS. Residues 65–101 lie on the Cytoplasmic side of the membrane; the sequence is SPENPNYARYERLLSQGWLFGRKVDNSDSQYRFFRDN. The chain crosses the membrane as a helical span at residues 102-122; the sequence is FALLSVLMLVHTSIKRIVLYS. Residues 123–131 lie on the Extracellular side of the membrane; sequence TNITKLRFD. The helical transmembrane segment at 132–152 threads the bilayer; the sequence is LIFGLIFLVAAHGVNSIRILA. Over 153-165 the chain is Cytoplasmic; it reads HMLILYAIAHVLK. The chain crosses the membrane as a helical span at residues 166 to 185; that stretch reads NFRRIATISIWIYGISTLFI. Residues 186-276 are Extracellular-facing; the sequence is NDNFRAYPFG…AAHPIQDYSL (91 aa). A helical membrane pass occupies residues 277–297; it reads MNYIAYVTYTPLFIAGPIITF. Residues 298–322 are Cytoplasmic-facing; that stretch reads NDYVYQSKHTLPSINFKFIFYYAVR. The chain crosses the membrane as a helical span at residues 323-343; sequence FVIALLSMEFILHFLHVVAIS. Residues 344 to 352 are Extracellular-facing; that stretch reads KTKAWENDT. A helical membrane pass occupies residues 353–373; that stretch reads PFQISMIGLFNLNIIWLKLLI. Residues 374–432 lie on the Cytoplasmic side of the membrane; that stretch reads PWRLFRLWALLDGIDTPENMIRCVDNNYSSLAFWRAWHRSYNKWVVRYIYIPLGGSKNR. Helical transmembrane passes span 433 to 453 and 454 to 474; these read VLTS…ELKL and LLWG…TQIF. Residue histidine 447 is part of the active site. Residues 475–485 are Cytoplasmic-facing; the sequence is SHYTDAVWYRH. Residues 486–506 form a helical membrane-spanning segment; that stretch reads VCAVGAVFNIWVMMIANLFGF. Residues 507-526 lie on the Extracellular side of the membrane; it reads CLGSDGTKKLLSDMFCTVSG. A helical transmembrane segment spans residues 527–547; it reads FKFVILASVSLFIAVQIMFEI. Residues 548–560 are Cytoplasmic-facing; sequence REEEKRHGIYLKC.

Belongs to the membrane-bound acyltransferase family. In terms of assembly, interacts with mitochondrial outer membrane voltage-dependent anion channel (VDAC) POR1.

Its subcellular location is the cell membrane. The protein resides in the endoplasmic reticulum membrane. It localises to the mitochondrion membrane. Functionally, membrane-bound O-acyltransferase involved in the remodeling of glycosylphosphatidylinositol (GPI) anchors. Acts only on GPI-anchored proteins, but not on free GPI lipids. Acts as an acyltransferase for GPI anchors that adds C26 fatty acids to the sn2 position of lyso-PI-containing GPI anchors. PER1 first deacylates, GUP1 subsequently reacylates the anchor lipid, thus replacing a shorter fatty acid (C16:0 or C18:0) by C26:0. Also involved in lipid metabolism, having profound effects on sphingolipid-sterol-ordered domains integrity and assembly. Together with GUP2, has an influence on the chemical composition of the yeast extracellular matrix (yECM) in yeast multicellular aggregates, such as biofilms and colonies. Involved in cell integrity and apoptosis. The protein is Membrane-bound O-acyltransferase GUP1 (GUP1) of Saccharomyces cerevisiae (strain ATCC 204508 / S288c) (Baker's yeast).